We begin with the raw amino-acid sequence, 181 residues long: Oligoribonuclease (181 aa).

Residues 8-171 (LIWIDMEMTG…ADIYDSIEEL (164 aa)) enclose the Exonuclease domain. Tyr-129 is a catalytic residue.

It belongs to the oligoribonuclease family.

The protein resides in the cytoplasm. Functionally, 3'-to-5' exoribonuclease specific for small oligoribonucleotides. In Nitrosomonas europaea (strain ATCC 19718 / CIP 103999 / KCTC 2705 / NBRC 14298), this protein is Oligoribonuclease.